A 522-amino-acid chain; its full sequence is Glucose-1-phosphate adenylyltransferase large subunit 1, chloroplastic (522 aa).

Residues 1–54 constitute a chloroplast transit peptide; that stretch reads MVVSADCRISLSAPSCIRSSSTGLTRHIKLGSFCNGELMGKKLNLSQLPNIRLR. The residue at position 428 (serine 428) is a Phosphoserine.

The protein belongs to the bacterial/plant glucose-1-phosphate adenylyltransferase family. In terms of assembly, heterotetramer. Leaves.

The protein localises to the plastid. It is found in the chloroplast. It carries out the reaction alpha-D-glucose 1-phosphate + ATP + H(+) = ADP-alpha-D-glucose + diphosphate. The protein operates within glycan biosynthesis; starch biosynthesis. Its activity is regulated as follows. Activated by 3'phosphoglycerate, inhibited by orthophosphate. Allosteric regulation. Functionally, this protein plays a role in synthesis of starch. It catalyzes the synthesis of the activated glycosyl donor, ADP-glucose from Glc-1-P and ATP. The protein is Glucose-1-phosphate adenylyltransferase large subunit 1, chloroplastic (ADG2) of Arabidopsis thaliana (Mouse-ear cress).